A 249-amino-acid polypeptide reads, in one-letter code: Ditrans,polycis-undecaprenyl-diphosphate synthase ((2E,6E)-farnesyl-diphosphate specific) (249 aa).

Asp18 is an active-site residue. Residue Asp18 coordinates Mg(2+). Substrate contacts are provided by residues Gly19–Arg22, Phe23, Lys31, His35, and Ser63–Glu65. Asn66 (proton acceptor) is an active-site residue. Substrate is bound by residues Trp67, Arg69, Arg186, and Arg192–Ser194. Glu205 contributes to the Mg(2+) binding site.

Belongs to the UPP synthase family. In terms of assembly, homodimer. Mg(2+) serves as cofactor.

The enzyme catalyses 8 isopentenyl diphosphate + (2E,6E)-farnesyl diphosphate = di-trans,octa-cis-undecaprenyl diphosphate + 8 diphosphate. Catalyzes the sequential condensation of isopentenyl diphosphate (IPP) with (2E,6E)-farnesyl diphosphate (E,E-FPP) to yield (2Z,6Z,10Z,14Z,18Z,22Z,26Z,30Z,34E,38E)-undecaprenyl diphosphate (di-trans,octa-cis-UPP). UPP is the precursor of glycosyl carrier lipid in the biosynthesis of bacterial cell wall polysaccharide components such as peptidoglycan and lipopolysaccharide. The protein is Ditrans,polycis-undecaprenyl-diphosphate synthase ((2E,6E)-farnesyl-diphosphate specific) of Acinetobacter baylyi (strain ATCC 33305 / BD413 / ADP1).